Here is a 532-residue protein sequence, read N- to C-terminus: ATP-dependent RNA helicase DBP3 (532 aa).

Residues 1–78 are disordered; sequence MGKRDRTEDD…EVAEEKPKMT (78 aa). Over residues 15–58 the composition is skewed to basic residues; that stretch reads KKVKLDKKDKKEKKEKKDKKDKKDKKDKKDKKDKKEKKEKKEKK. Positions 126 to 152 match the Q motif motif; that stretch reads MEFSHVTLDPRITKVLTKFPRPTPIQA. One can recognise a Helicase ATP-binding domain in the interval 155–327; sequence WPYLLAGKDM…EGFMKTPTKV (173 aa). 168-175 contributes to the ATP binding site; that stretch reads AETGSGKT. The DEAD box motif lies at 274 to 277; that stretch reads DEAD. The 147-residue stretch at 356-502 folds into the Helicase C-terminal domain; that stretch reads RLLDLLRQYA…PVPDELLKFG (147 aa).

It belongs to the DEAD box helicase family. DDX5/DBP2 subfamily.

It is found in the nucleus. It localises to the nucleolus. It catalyses the reaction ATP + H2O = ADP + phosphate + H(+). Functionally, ATP-dependent RNA helicase required for 60S ribosomal subunit synthesis. Involved in efficient pre-rRNA processing, predominantly at site A3, which is necessary for the normal formation of 25S and 5.8S rRNAs. This Yarrowia lipolytica (strain CLIB 122 / E 150) (Yeast) protein is ATP-dependent RNA helicase DBP3 (DBP3).